A 294-amino-acid chain; its full sequence is Phosphatidylserine decarboxylase proenzyme (294 aa).

Active-site charge relay system; for autoendoproteolytic cleavage activity residues include Asp88, His145, and Ser248. Ser248 (schiff-base intermediate with substrate; via pyruvic acid; for decarboxylase activity) is an active-site residue. The residue at position 248 (Ser248) is a Pyruvic acid (Ser); by autocatalysis.

This sequence belongs to the phosphatidylserine decarboxylase family. PSD-B subfamily. Prokaryotic type I sub-subfamily. Heterodimer of a large membrane-associated beta subunit and a small pyruvoyl-containing alpha subunit. Pyruvate is required as a cofactor. Post-translationally, is synthesized initially as an inactive proenzyme. Formation of the active enzyme involves a self-maturation process in which the active site pyruvoyl group is generated from an internal serine residue via an autocatalytic post-translational modification. Two non-identical subunits are generated from the proenzyme in this reaction, and the pyruvate is formed at the N-terminus of the alpha chain, which is derived from the carboxyl end of the proenzyme. The autoendoproteolytic cleavage occurs by a canonical serine protease mechanism, in which the side chain hydroxyl group of the serine supplies its oxygen atom to form the C-terminus of the beta chain, while the remainder of the serine residue undergoes an oxidative deamination to produce ammonia and the pyruvoyl prosthetic group on the alpha chain. During this reaction, the Ser that is part of the protease active site of the proenzyme becomes the pyruvoyl prosthetic group, which constitutes an essential element of the active site of the mature decarboxylase.

It is found in the cell membrane. The enzyme catalyses a 1,2-diacyl-sn-glycero-3-phospho-L-serine + H(+) = a 1,2-diacyl-sn-glycero-3-phosphoethanolamine + CO2. It functions in the pathway phospholipid metabolism; phosphatidylethanolamine biosynthesis; phosphatidylethanolamine from CDP-diacylglycerol: step 2/2. In terms of biological role, catalyzes the formation of phosphatidylethanolamine (PtdEtn) from phosphatidylserine (PtdSer). In Herminiimonas arsenicoxydans, this protein is Phosphatidylserine decarboxylase proenzyme.